The chain runs to 173 residues: Bilin biosynthesis protein PecF (173 aa).

This sequence belongs to the CpcE/RpcE/PecE family.

Its function is as follows. An enzyme involved in the biosynthesis of bilin. The sequence is that of Bilin biosynthesis protein PecF (pecF) from Nostoc sp. (strain PCC 7120 / SAG 25.82 / UTEX 2576).